A 186-amino-acid polypeptide reads, in one-letter code: Cytochrome b6-f complex iron-sulfur subunit (186 aa).

Residues 16–38 (LLSFVTGGAIAATTAATLYPVVL) traverse the membrane as a helical segment. The Rieske domain maps to 74 to 163 (GEPVLTLGLD…ATVSDDKVLI (90 aa)). [2Fe-2S] cluster contacts are provided by Cys109, His111, Cys127, and His130. Cys114 and Cys129 are oxidised to a cystine.

Belongs to the Rieske iron-sulfur protein family. In terms of assembly, the 4 large subunits of the cytochrome b6-f complex are cytochrome b6, subunit IV (17 kDa polypeptide, PetD), cytochrome f and the Rieske protein, while the 4 small subunits are PetG, PetL, PetM and PetN. The complex functions as a dimer. [2Fe-2S] cluster serves as cofactor.

It localises to the cell inner membrane. The enzyme catalyses 2 oxidized [plastocyanin] + a plastoquinol + 2 H(+)(in) = 2 reduced [plastocyanin] + a plastoquinone + 4 H(+)(out). Its function is as follows. Component of the cytochrome b6-f complex, which mediates electron transfer between photosystem II (PSII) and photosystem I (PSI), cyclic electron flow around PSI, and state transitions. This Gloeobacter violaceus (strain ATCC 29082 / PCC 7421) protein is Cytochrome b6-f complex iron-sulfur subunit.